A 203-amino-acid polypeptide reads, in one-letter code: CS5 fimbrial subunit (203 aa).

An N-terminal signal peptide occupies residues 1-22 (MKKNLLITSVLAMATVSGSVLA).

It is found in the fimbrium. In terms of biological role, major subunit of fimbriae. Fimbriae (also called pili), are polar filaments radiating from the surface of the bacterium to a length of 0.5-1.5 micrometers and numbering 100-300 per cell. They enable bacteria to colonize the epithelium of specific host organs. The polypeptide is CS5 fimbrial subunit (Escherichia coli).